A 476-amino-acid chain; its full sequence is Cysteine--tRNA ligase (476 aa).

Zn(2+) is bound at residue C36. The 'HIGH' region motif lies at 38–48 (PTVYDYAHIGN). Positions 221, 246, and 250 each coordinate Zn(2+). Positions 278-282 (KMSKS) match the 'KMSKS' region motif. K281 contacts ATP.

This sequence belongs to the class-I aminoacyl-tRNA synthetase family. In terms of assembly, monomer. Requires Zn(2+) as cofactor.

The protein resides in the cytoplasm. The catalysed reaction is tRNA(Cys) + L-cysteine + ATP = L-cysteinyl-tRNA(Cys) + AMP + diphosphate. In Chlamydia caviae (strain ATCC VR-813 / DSM 19441 / 03DC25 / GPIC) (Chlamydophila caviae), this protein is Cysteine--tRNA ligase.